The chain runs to 570 residues: Nucleoprotein (570 aa).

Positions 54 to 241 (MRKEKRDDSD…IEPKKSAINI (188 aa)) are binding site for the cap structure m7GTP. The Mn(2+) site is built by aspartate 390 and glutamate 392. Zn(2+) is bound by residues glutamate 400, cysteine 507, histidine 510, and cysteine 530. Aspartate 534 contacts Mn(2+).

This sequence belongs to the arenaviridae nucleocapsid protein family. Homomultimerizes to form the nucleocapsid. Binds to viral genomic RNA. Interacts with glycoprotein G2. Interacts with protein Z; this interaction probably directs the encapsidated genome to budding sites. Interacts with protein L; this interaction does not interfere with Z-L interaction. Interacts with host IKBKE (via Protein kinase domain); the interaction inhibits IKBKE kinase activity.

The protein localises to the virion. Its subcellular location is the host cytoplasm. In terms of biological role, encapsidates the genome, protecting it from nucleases. The encapsidated genomic RNA is termed the nucleocapsid (NC). Serves as template for viral transcription and replication. The increased presence of protein N in host cell does not seem to trigger the switch from transcription to replication as observed in other negative strain RNA viruses. Through the interaction with host IKBKE, strongly inhibits the phosphorylation and nuclear translocation of host IRF3, a protein involved in interferon activation pathway, leading to the inhibition of interferon-beta and IRF3-dependent promoters activation. Also encodes a functional 3'-5' exoribonuclease that degrades preferentially dsRNA substrates and thereby participates in the suppression of interferon induction. This chain is Nucleoprotein, found in Mopeia virus (MOPV).